A 188-amino-acid polypeptide reads, in one-letter code: Pro-adrenomedullin (188 aa).

The N-terminal stretch at 1–21 (MKLVPVALLYLGSLAFLGVDT) is a signal peptide. Arginine 41 carries the arginine amide modification. Residues 45–92 (ELRESSSYPTGLADVKAGPVQTLIRPQDVKGASRSPQASSPDAARIRV) constitute a propeptide that is removed on maturation. The disordered stretch occupies residues 69 to 89 (RPQDVKGASRSPQASSPDAAR). Cysteine 110 and cysteine 115 are oxidised to a cystine. A disordered region spans residues 129–175 (DKDKDGSAPRSKISPQGYGRRRRRSLPEAGLGRTLLQPPEPKLRGAP). Tyrosine amide is present on tyrosine 146. Residues 153–188 (SLPEAGLGRTLLQPPEPKLRGAPDSRVHQVLATLRI) constitute a propeptide, preproAM C-terminal fragment.

The protein belongs to the adrenomedullin family.

The protein resides in the secreted. Adrenomedullin/ADM and proadrenomedullin N-20 terminal peptide/PAMP are peptide hormones that act as potent hypotensive and vasodilatator agents. Numerous actions have been reported most related to the physiologic control of fluid and electrolyte homeostasis. In terms of biological role, ADM function is mediated by the CALCRL-RAMP2 and CALCRL-RAMP3 receptor complexes with ADM showing the highest potency for the CALCRL-RAMP2 complex. In Bos taurus (Bovine), this protein is Pro-adrenomedullin (ADM).